The primary structure comprises 688 residues: DNA ligase (688 aa).

NAD(+)-binding positions include 38–42, 87–88, and glutamate 118; these read DEEYD and SL. Lysine 120 functions as the N6-AMP-lysine intermediate in the catalytic mechanism. The NAD(+) site is built by arginine 141, glutamate 175, lysine 291, and lysine 315. Positions 409, 412, 428, and 433 each coordinate Zn(2+). The BRCT domain occupies 590 to 679; sequence VKLDILRGLT…AELKGYNFDE (90 aa).

This sequence belongs to the NAD-dependent DNA ligase family. LigA subfamily. The cofactor is Mg(2+). It depends on Mn(2+) as a cofactor.

It carries out the reaction NAD(+) + (deoxyribonucleotide)n-3'-hydroxyl + 5'-phospho-(deoxyribonucleotide)m = (deoxyribonucleotide)n+m + AMP + beta-nicotinamide D-nucleotide.. DNA ligase that catalyzes the formation of phosphodiester linkages between 5'-phosphoryl and 3'-hydroxyl groups in double-stranded DNA using NAD as a coenzyme and as the energy source for the reaction. It is essential for DNA replication and repair of damaged DNA. The polypeptide is DNA ligase (Thermotoga maritima (strain ATCC 43589 / DSM 3109 / JCM 10099 / NBRC 100826 / MSB8)).